The chain runs to 218 residues: Ras-related protein Rab11D (218 aa).

20-27 (GDSGVGKS) is a GTP binding site. An Effector region motif is present at residues 42–50 (SKSTIGVEF). Residues 68–72 (DTAGQ) and 126–129 (NKSD) contribute to the GTP site. Residues Cys215 and Cys216 are each lipidated (S-geranylgeranyl cysteine).

The protein belongs to the small GTPase superfamily. Rab family.

It localises to the cell membrane. The sequence is that of Ras-related protein Rab11D (RAB11D) from Lotus japonicus (Lotus corniculatus var. japonicus).